A 255-amino-acid chain; its full sequence is Protein DOG1-like 2 (255 aa).

One can recognise a DOG1 domain in the interval 10-246; the sequence is EKLQKRCYHE…HDRGRVRADV (237 aa).

The polypeptide is Protein DOG1-like 2 (Arabidopsis thaliana (Mouse-ear cress)).